The following is a 278-amino-acid chain: NAD-capped RNA hydrolase NudC (278 aa).

Arg-84 is a binding site for substrate. Positions 114 and 117 each coordinate Zn(2+). Glu-127 lines the substrate pocket. A Zn(2+)-binding site is contributed by Cys-132. Tyr-140 is a binding site for substrate. Positions 141–264 constitute a Nudix hydrolase domain; the sequence is PRISPSMIVL…SIARYLIEAY (124 aa). A divalent metal cation-binding residues include Ala-174, Glu-190, and Glu-194. The Nudix box motif lies at 175–196; sequence GFVEPGESAEDCVHREVMEEVQ. 208 to 215 provides a ligand contact to substrate; the sequence is QCWPFPHS. An a divalent metal cation-binding site is contributed by Glu-235. Ala-257 contacts substrate.

The protein belongs to the Nudix hydrolase family. NudC subfamily. In terms of assembly, homodimer. Mg(2+) serves as cofactor. The cofactor is Mn(2+). Zn(2+) is required as a cofactor.

It catalyses the reaction a 5'-end NAD(+)-phospho-ribonucleoside in mRNA + H2O = a 5'-end phospho-adenosine-phospho-ribonucleoside in mRNA + beta-nicotinamide D-ribonucleotide + 2 H(+). The enzyme catalyses NAD(+) + H2O = beta-nicotinamide D-ribonucleotide + AMP + 2 H(+). The catalysed reaction is NADH + H2O = reduced beta-nicotinamide D-ribonucleotide + AMP + 2 H(+). Its function is as follows. mRNA decapping enzyme that specifically removes the nicotinamide adenine dinucleotide (NAD) cap from a subset of mRNAs by hydrolyzing the diphosphate linkage to produce nicotinamide mononucleotide (NMN) and 5' monophosphate mRNA. The NAD-cap is present at the 5'-end of some mRNAs and stabilizes RNA against 5'-processing. Has preference for mRNAs with a 5'-end purine. Catalyzes the hydrolysis of a broad range of dinucleotide pyrophosphates. The sequence is that of NAD-capped RNA hydrolase NudC from Pseudomonas syringae pv. tomato (strain ATCC BAA-871 / DC3000).